The primary structure comprises 483 residues: Siroheme synthase (483 aa).

The segment at 1–203 is precorrin-2 dehydrogenase /sirohydrochlorin ferrochelatase; the sequence is MNYFPIFANL…RQNTLAEREL (203 aa). NAD(+) is bound by residues 22-23 and 43-44; these read AV and KH. Phosphoserine is present on serine 128. The uroporphyrinogen-III C-methyltransferase stretch occupies residues 214-483; that stretch reads GFVSLVGAGP…LGTGQEQQAA (270 aa). Proline 223 contributes to the S-adenosyl-L-methionine binding site. Aspartate 246 (proton acceptor) is an active-site residue. Lysine 268 serves as the catalytic Proton donor. Residues 299-301, valine 304, 329-330, methionine 381, and glycine 410 contribute to the S-adenosyl-L-methionine site; these read GGD and TA.

This sequence in the N-terminal section; belongs to the precorrin-2 dehydrogenase / sirohydrochlorin ferrochelatase family. The protein in the C-terminal section; belongs to the precorrin methyltransferase family.

The catalysed reaction is uroporphyrinogen III + 2 S-adenosyl-L-methionine = precorrin-2 + 2 S-adenosyl-L-homocysteine + H(+). It catalyses the reaction precorrin-2 + NAD(+) = sirohydrochlorin + NADH + 2 H(+). It carries out the reaction siroheme + 2 H(+) = sirohydrochlorin + Fe(2+). It functions in the pathway cofactor biosynthesis; adenosylcobalamin biosynthesis; precorrin-2 from uroporphyrinogen III: step 1/1. Its pathway is cofactor biosynthesis; adenosylcobalamin biosynthesis; sirohydrochlorin from precorrin-2: step 1/1. It participates in porphyrin-containing compound metabolism; siroheme biosynthesis; precorrin-2 from uroporphyrinogen III: step 1/1. The protein operates within porphyrin-containing compound metabolism; siroheme biosynthesis; siroheme from sirohydrochlorin: step 1/1. It functions in the pathway porphyrin-containing compound metabolism; siroheme biosynthesis; sirohydrochlorin from precorrin-2: step 1/1. Functionally, multifunctional enzyme that catalyzes the SAM-dependent methylations of uroporphyrinogen III at position C-2 and C-7 to form precorrin-2 via precorrin-1. Then it catalyzes the NAD-dependent ring dehydrogenation of precorrin-2 to yield sirohydrochlorin. Finally, it catalyzes the ferrochelation of sirohydrochlorin to yield siroheme. This chain is Siroheme synthase, found in Neisseria meningitidis serogroup C / serotype 2a (strain ATCC 700532 / DSM 15464 / FAM18).